A 417-amino-acid polypeptide reads, in one-letter code: Hyaluronidase-3 (417 aa).

The signal sequence occupies residues 1–20 (MTTQLGPALVLGVALCLGCG). Disulfide bonds link Cys-42–Cys-331, Cys-205–Cys-220, Cys-356–Cys-367, Cys-361–Cys-395, and Cys-397–Cys-406. The N-linked (GlcNAc...) asparagine glycan is linked to Asn-69. The active-site Proton donor is the Glu-129. An N-linked (GlcNAc...) asparagine glycan is attached at Asn-215. Residues 352–407 (AAMACSHQRCHGHGRCARRDPGQMEAFLHLWPDGSLGDWKSFSCHCYWGWAGPTCQ) enclose the EGF-like domain.

Belongs to the glycosyl hydrolase 56 family. In terms of processing, N-glycosylated. In terms of tissue distribution, expressed in sperm. Highly expressed in epidermis of the skin, where it is expressed intracellularily in the deep horny layer (at protein level). Bone marrow, testis and kidney.

Its subcellular location is the secreted. It localises to the cell membrane. The protein resides in the cytoplasmic vesicle. The protein localises to the secretory vesicle. It is found in the acrosome. Its subcellular location is the endoplasmic reticulum. It localises to the early endosome. It catalyses the reaction Random hydrolysis of (1-&gt;4)-linkages between N-acetyl-beta-D-glucosamine and D-glucuronate residues in hyaluronate.. Facilitates sperm penetration into the layer of cumulus cells surrounding the egg by digesting hyaluronic acid. Involved in induction of the acrosome reaction in the sperm. Involved in follicular atresia, the breakdown of immature ovarian follicles that are not selected to ovulate. Induces ovarian granulosa cell apoptosis, possibly via apoptotic signaling pathway involving CASP8 and CASP3 activation, and poly(ADP-ribose) polymerase (PARP) cleavage. Has no hyaluronidase activity in embryonic fibroblasts in vitro. Has no hyaluronidase activity in granulosa cells in vitro. This Homo sapiens (Human) protein is Hyaluronidase-3 (HYAL3).